The following is a 130-amino-acid chain: Small ribosomal subunit protein uS9 (130 aa).

Residues 109 to 130 (RKKERKKYGQPGARAKFQYSKR) form a disordered region.

This sequence belongs to the universal ribosomal protein uS9 family.

This Maridesulfovibrio salexigens (strain ATCC 14822 / DSM 2638 / NCIMB 8403 / VKM B-1763) (Desulfovibrio salexigens) protein is Small ribosomal subunit protein uS9.